The sequence spans 289 residues: Glucosamine-6-phosphate deaminase 1 (289 aa).

Position 64 is an N6-acetyllysine (Lys-64). The Proton acceptor; for enolization step role is filled by Asp-72. The active-site For ring-opening step is Asp-141. Catalysis depends on His-143, which acts as the Proton acceptor; for ring-opening step. Glu-148 serves as the catalytic For ring-opening step. Thr-161 bears the Phosphothreonine mark.

Belongs to the glucosamine/galactosamine-6-phosphate isomerase family. Homohexamer.

It is found in the cytoplasm. It carries out the reaction alpha-D-glucosamine 6-phosphate + H2O = beta-D-fructose 6-phosphate + NH4(+). It functions in the pathway nucleotide-sugar biosynthesis; UDP-N-acetyl-alpha-D-glucosamine biosynthesis; alpha-D-glucosamine 6-phosphate from D-fructose 6-phosphate: step 1/1. With respect to regulation, allosterically activated by N-acetylglucosamine-6-phosphate (GlcNAc6P). Its function is as follows. Catalyzes the reversible conversion of alpha-D-glucosamine 6-phosphate (GlcN-6P) into beta-D-fructose 6-phosphate (Fru-6P) and ammonium ion, a regulatory reaction step in de novo uridine diphosphate-N-acetyl-alpha-D-glucosamine (UDP-GlcNAc) biosynthesis via hexosamine pathway. Deamination is coupled to aldo-keto isomerization mediating the metabolic flux from UDP-GlcNAc toward Fru-6P. At high ammonium level can drive amination and isomerization of Fru-6P toward hexosamines and UDP-GlcNAc synthesis. Has a role in fine tuning the metabolic fluctuations of cytosolic UDP-GlcNAc and their effects on hyaluronan synthesis that occur during tissue remodeling. Seems to trigger calcium oscillations in mammalian eggs. These oscillations serve as the essential trigger for egg activation and early development of the embryo. The chain is Glucosamine-6-phosphate deaminase 1 from Bos taurus (Bovine).